A 912-amino-acid polypeptide reads, in one-letter code: WD repeat-containing protein 44 (912 aa).

3 disordered regions span residues 206–352 (DIIE…ELTD), 399–426 (SNDAAQSDDEEKPQSHQSETDGGKLKQK), and 460–481 (RDEVFHTDQDDPSSSDDEGMPY). The span at 236-258 (NRPPQPINAPPPRPPPPARPAPP) shows a compositional bias: pro residues. The segment covering 264 to 278 (GDTDFDRSSGFEYQK) has biased composition (basic and acidic residues). Over residues 288-311 (SPNTLTENMNRDSQPSLDLASATS) the composition is skewed to polar residues. The span at 410-422 (KPQSHQSETDGGK) shows a compositional bias: basic and acidic residues. The segment covering 469-478 (DDPSSSDDEG) has biased composition (acidic residues). The stretch at 511-550 (EHVGAVWTMKFSHCGRLLASAGQDNVVRIWVLKNAFDYFN) is one WD 1 repeat. Residues 559-594 (EGRVSPSPSQESLNSSKSDTDGGVFSGTDDVDPDDK) are disordered. Positions 563–575 (SPSPSQESLNSSK) are enriched in low complexity. WD repeat units follow at residues 608–646 (GHTADLLDLSWSKNYFLLSSSMDKTVRLWHISRRECLCC), 648–688 (QHID…VALW), 693–732 (GQTKLITAANFCQNGKHAVIGTYDGRCIFYDTEHLKYHTQ), 743–782 (RVGRKITGIEPLPGENKILVTSNDSRIRLYDLRDLSLSMK), 787–826 (VNSSSQIKASFSHDFTYIVSGSEDKYVYIWSTYHDLSKFT), 841–880 (AHNAVVTSAIFAPNPGLMVSAETSSEKQEGDQAEPVENIP), and 882–912 (GALKSDHTEVLLSADFTGAIKVFINKKKNIS). The segment at 861-882 (AETSSEKQEGDQAEPVENIPSG) is disordered.

The protein localises to the cytoplasm. It localises to the cytosol. Its subcellular location is the perinuclear region. It is found in the endosome membrane. The protein resides in the golgi apparatus. The protein localises to the trans-Golgi network. In terms of biological role, downstream effector for rab11. May be involved in vesicle recycling. May also be involved in the inhibition of the intracellular ciliogenesis pathway. In Xenopus laevis (African clawed frog), this protein is WD repeat-containing protein 44 (wdr44).